Consider the following 564-residue polypeptide: Quinone-dependent D-lactate dehydrogenase (564 aa).

Residues G36–V207 enclose the FAD-binding PCMH-type domain. FAD contacts are provided by residues A70–G74, G78–S79, G137, S144, G154, and V256.

Belongs to the quinone-dependent D-lactate dehydrogenase family. FAD is required as a cofactor.

The protein localises to the cell inner membrane. The catalysed reaction is (R)-lactate + a quinone = a quinol + pyruvate. Catalyzes the oxidation of D-lactate to pyruvate. This Haemophilus influenzae (strain ATCC 51907 / DSM 11121 / KW20 / Rd) protein is Quinone-dependent D-lactate dehydrogenase.